Consider the following 111-residue polypeptide: Flagellar hook-basal body complex protein FliE (111 aa).

This sequence belongs to the FliE family.

Its subcellular location is the bacterial flagellum basal body. This is Flagellar hook-basal body complex protein FliE from Brucella ovis (strain ATCC 25840 / 63/290 / NCTC 10512).